Reading from the N-terminus, the 634-residue chain is tRNA uridine 5-carboxymethylaminomethyl modification enzyme MnmG (634 aa).

13 to 18 (GAGHAG) lines the FAD pocket. Residue 273–287 (GPRYCPSIEDKIIKF) participates in NAD(+) binding.

Belongs to the MnmG family. As to quaternary structure, homodimer. Heterotetramer of two MnmE and two MnmG subunits. The cofactor is FAD.

The protein resides in the cytoplasm. Its function is as follows. NAD-binding protein involved in the addition of a carboxymethylaminomethyl (cmnm) group at the wobble position (U34) of certain tRNAs, forming tRNA-cmnm(5)s(2)U34. The protein is tRNA uridine 5-carboxymethylaminomethyl modification enzyme MnmG of Buchnera aphidicola subsp. Cinara cedri (strain Cc).